A 116-amino-acid polypeptide reads, in one-letter code: Transmembrane protein 213 (116 aa).

Residues 1–35 (MAQSGVFLRNPGHLTSAPQAALLFSLVLTSFHLSC) form the signal peptide. The Extracellular segment spans residues 36 to 79 (GTETSSSNSTLSAHHPDPGTLEQCANVDFCPLASLCCRASVDEY). A helical membrane pass occupies residues 80–100 (GWIAAAVGWSFWFLTLILLCV). The Cytoplasmic segment spans residues 101–116 (DKLMKLTPEEPKDLAA).

The protein localises to the membrane. In Mus musculus (Mouse), this protein is Transmembrane protein 213 (Tmem213).